Reading from the N-terminus, the 118-residue chain is V-type proton ATPase subunit G 2 (118 aa).

A disordered region spans residues 23–90; it reads ADARKRKARR…VQGMQSSQQR (68 aa). Residues 35–55 show a composition bias toward basic and acidic residues; sequence QAKEEAQMEVEQYRREREQEF. Composition is skewed to polar residues over residues 56 to 69 and 78 to 89; these read QSKQQAAMGSQGNL and RRQVQGMQSSQQ.

Belongs to the V-ATPase G subunit family. In terms of assembly, V-ATPase is a heteromultimeric enzyme made up of two complexes: the ATP-hydrolytic V1 complex and the proton translocation V0 complex. The V1 complex consists of three catalytic AB heterodimers that form a heterohexamer, three peripheral stalks each consisting of EG heterodimers, one central rotor including subunits D and F, and the regulatory subunits C and H. The proton translocation complex V0 consists of the proton transport subunit a, a ring of proteolipid subunits c9c'', rotary subunit d, subunits e and f, and the accessory subunits ATP6AP1/Ac45 and ATP6AP2/PRR.

It localises to the melanosome. It is found in the cytoplasmic vesicle. The protein resides in the clathrin-coated vesicle membrane. Functionally, subunit of the V1 complex of vacuolar(H+)-ATPase (V-ATPase), a multisubunit enzyme composed of a peripheral complex (V1) that hydrolyzes ATP and a membrane integral complex (V0) that translocates protons. V-ATPase is responsible for acidifying and maintaining the pH of intracellular compartments and in some cell types, is targeted to the plasma membrane, where it is responsible for acidifying the extracellular environment. This Macaca mulatta (Rhesus macaque) protein is V-type proton ATPase subunit G 2 (ATP6V1G2).